We begin with the raw amino-acid sequence, 228 residues long: MSVTLDVRTPDGKTDGTVELPAEIFDVQANIALMHQVVVAQLAAGRQGTHATKTRGQVSGGGKKPYRQKGTGNARQGSIRAPQFTGGGTVHGPQPRDYSQRTPKKMKVAALRGALSDRVRAGQLHVVSHVVGGEQPSTKQARTAVRTWTEAKRVLVVLNKSEETSWLSLRNLQNVHLIDPSQLNTYDVLVNDDVVFTKAAFERFVAGPAKGKTAKAAATSGEAEEANQ.

Disordered stretches follow at residues 45–102 (GRQG…SQRT) and 208–228 (PAKG…EANQ). The segment covering 208–221 (PAKGKTAKAAATSG) has biased composition (low complexity).

The protein belongs to the universal ribosomal protein uL4 family. Part of the 50S ribosomal subunit.

Its function is as follows. One of the primary rRNA binding proteins, this protein initially binds near the 5'-end of the 23S rRNA. It is important during the early stages of 50S assembly. It makes multiple contacts with different domains of the 23S rRNA in the assembled 50S subunit and ribosome. In terms of biological role, forms part of the polypeptide exit tunnel. In Saccharopolyspora erythraea (strain ATCC 11635 / DSM 40517 / JCM 4748 / NBRC 13426 / NCIMB 8594 / NRRL 2338), this protein is Large ribosomal subunit protein uL4.